A 1582-amino-acid chain; its full sequence is SET-binding protein (1582 aa).

4 disordered regions span residues 1-76 (MEPR…WVAG), 124-246 (ITIK…KVPA), 278-416 (LLGS…KRQS), and 446-513 (SNSE…KLSE). Residues 18–27 (EFLQGSSSRS) are compositionally biased toward polar residues. The span at 57–74 (GSGRDVDCNSNADSEKWV) shows a compositional bias: basic and acidic residues. Polar residues-rich tracts occupy residues 126–141 (IKQSGDQKVSRTGKNS) and 213–229 (MEWSSNSDSGPATQNCF). Low complexity predominate over residues 278–298 (LLGSVVPSPSSHNSPATPSSS). Over residues 356-365 (ETTEGKREAY) the composition is skewed to basic and acidic residues. Polar residues predominate over residues 368–388 (DSAQEASPARQSISSVSNPEN). The span at 450 to 465 (GSKKDPRVPKLGKMIE) shows a compositional bias: basic and acidic residues. The segment at residues 575–587 (KKKRGRPKKQPLL) is a DNA-binding region (a.T hook 1). Disordered stretches follow at residues 595-617 (GTSTSPVSPISREFPGTKKRKRR) and 709-787 (RGTI…ASTE). Polar residues predominate over residues 770-787 (LSTQLGGSNGNLSPASTE). Lys808 is modified (N6-acetyllysine). Polar residues predominate over residues 845 to 871 (SPVSESHSEETIPSDSGIGTDNNSTSD). The disordered stretch occupies residues 845–880 (SPVSESHSEETIPSDSGIGTDNNSTSDQAEKSSESR). The segment at residues 1007 to 1019 (KKKRGRPAKTNDT) is a DNA-binding region (a.T hook 2). 6 disordered regions span residues 1128 to 1155 (VGGATLSSSRLHKRKHKHKRKHKEDRIL), 1182 to 1215 (SGSDKELPLVSEKSKHKERQKHQHGEASHKVSKN), 1236 to 1265 (AKDKGDLSSEPVESCAKRYSGSGGDSTRSE), 1429 to 1461 (QRQSKTGNNFVKKRRGRPRKQPSQFDEDSRDQM), 1470 to 1489 (LPSKRGQKPSLSPLALEPAS), and 1507 to 1582 (EAPP…DVLP). The segment covering 1137-1150 (RLHKRKHKHKRKHK) has biased composition (basic residues). The segment covering 1182-1196 (SGSDKELPLVSEKSK) has biased composition (basic and acidic residues). Residues 1439–1448 (VKKRRGRPRK) are compositionally biased toward basic residues. A DNA-binding region (a.T hook 3) is located at residues 1440 to 1452 (KKRRGRPRKQPSQ). Composition is skewed to pro residues over residues 1509–1533 (PPLPPPPPPPLPPPPPPPPPPPPLP) and 1546–1559 (QPPAQPAQPTPQPL).

Interacts with SET.

It localises to the nucleus. The sequence is that of SET-binding protein (Setbp1) from Mus musculus (Mouse).